A 308-amino-acid polypeptide reads, in one-letter code: Ribonuclease Z (308 aa).

Residues His61, His63, Asp65, His66, His139, Asp210, and His268 each coordinate Zn(2+). The Proton acceptor role is filled by Asp65.

This sequence belongs to the RNase Z family. As to quaternary structure, homodimer. Requires Zn(2+) as cofactor.

The enzyme catalyses Endonucleolytic cleavage of RNA, removing extra 3' nucleotides from tRNA precursor, generating 3' termini of tRNAs. A 3'-hydroxy group is left at the tRNA terminus and a 5'-phosphoryl group is left at the trailer molecule.. Its function is as follows. Zinc phosphodiesterase, which displays some tRNA 3'-processing endonuclease activity. Probably involved in tRNA maturation, by removing a 3'-trailer from precursor tRNA. The sequence is that of Ribonuclease Z from Halobacterium salinarum (strain ATCC 700922 / JCM 11081 / NRC-1) (Halobacterium halobium).